Consider the following 1205-residue polypeptide: Nitric oxide synthase 3 (1205 aa).

Residues M1–V73 form a disordered region. G2 carries the N-myristoyl glycine lipid modification. 2 S-palmitoyl cysteine lipidation sites follow: C15 and C26. Over residues C15–G27 the composition is skewed to gly residues. Residues T33–P47 show a composition bias toward pro residues. Zn(2+) is bound by residues C96 and C101. Residues R100–K488 form an interaction with NOSIP region. (6R)-L-erythro-5,6,7,8-tetrahydrobiopterin is bound at residue S104. S116 is subject to Phosphoserine; by CDK5. A heme b-binding site is contributed by C186. Residues Q249, W358, Y359, E363, and N368 each coordinate L-arginine. Residues A448, W449, and F462 each contribute to the (6R)-L-erythro-5,6,7,8-tetrahydrobiopterin site. Y477 is a heme b binding site. A calmodulin-binding region spans residues I492–M512. T497 carries the phosphothreonine; by AMPK modification. Residues A522–F705 form the Flavodoxin-like domain. Positions 528, 529, 530, 532, 574, and 575 each coordinate FMN. Phosphoserine occurs at positions 617, 635, and 640. The FMN site is built by S656, C663, E689, and Q693. The region spanning R758–P1004 is the FAD-binding FR-type domain. An NADP(+)-binding site is contributed by R778. An FAD-binding site is contributed by H800. The tract at residues E820–R848 is disordered. S838 bears the Phosphoserine mark. Residues R940, Y942, S943, T958, A960, Y964, V977, C978, and S979 each coordinate FAD. The NADP(+) site is built by T1018, R1051, S1080, R1081, K1087, Y1089, and Q1091. T1177 bears the Phosphothreonine mark. A Phosphoserine; by AMPK modification is found at S1179. A Phosphoserine modification is found at S1181.

This sequence belongs to the NOS family. As to quaternary structure, homodimer. Interacts with NOSIP and NOSTRIN. Interacts with HSP90AB1. Forms a complex with ASL, ASS1 and SLC7A1; the complex regulates cell-autonomous L-arginine synthesis and citrulline recycling while channeling extracellular L-arginine to nitric oxide synthesis pathway. It depends on heme b as a cofactor. FAD serves as cofactor. Requires FMN as cofactor. (6R)-L-erythro-5,6,7,8-tetrahydrobiopterin is required as a cofactor. Phosphorylation by AMPK at Ser-1179 in the presence of Ca(2+)-calmodulin (CaM) activates activity. In absence of Ca(2+)-calmodulin, AMPK also phosphorylates Thr-497, resulting in inhibition of activity. Phosphorylation of Ser-116 by CDK5 reduces activity.

Its subcellular location is the membrane. The protein resides in the caveola. It localises to the cytoplasm. The protein localises to the cytoskeleton. It is found in the golgi apparatus. Its subcellular location is the cell membrane. It carries out the reaction 2 L-arginine + 3 NADPH + 4 O2 + H(+) = 2 L-citrulline + 2 nitric oxide + 3 NADP(+) + 4 H2O. Stimulated by calcium/calmodulin. Inhibited by NOSIP and NOSTRIN. Its function is as follows. Produces nitric oxide (NO) which is implicated in vascular smooth muscle relaxation through a cGMP-mediated signal transduction pathway. NO mediates vascular endothelial growth factor (VEGF)-induced angiogenesis in coronary vessels and promotes blood clotting through the activation of platelets. The protein is Nitric oxide synthase 3 (NOS3) of Sus scrofa (Pig).